Reading from the N-terminus, the 505-residue chain is Histidine ammonia-lyase (505 aa).

Positions 141–143 form a cross-link, 5-imidazolinone (Ala-Gly); that stretch reads ASG. The residue at position 142 (Ser142) is a 2,3-didehydroalanine (Ser).

Belongs to the PAL/histidase family. Contains an active site 4-methylidene-imidazol-5-one (MIO), which is formed autocatalytically by cyclization and dehydration of residues Ala-Ser-Gly.

The protein resides in the cytoplasm. The enzyme catalyses L-histidine = trans-urocanate + NH4(+). It functions in the pathway amino-acid degradation; L-histidine degradation into L-glutamate; N-formimidoyl-L-glutamate from L-histidine: step 1/3. This Bacillus thuringiensis subsp. konkukian (strain 97-27) protein is Histidine ammonia-lyase.